Consider the following 626-residue polypeptide: ATP-dependent zinc metalloprotease FtsH (626 aa).

Residues 1 to 5 lie on the Cytoplasmic side of the membrane; sequence MNFRN. The chain crosses the membrane as a helical span at residues 6–26; sequence LAIWLVIVAVLGGVFVVSQNS. Topologically, residues 27-98 are periplasmic; it reads RTKSSSEISY…DVKFKSGSIS (72 aa). The helical transmembrane segment at 99–119 threads the bilayer; it reads FLAILVQLLPILLVVGVWLFL. Over 120–626 the chain is Cytoplasmic; it reads MRQMQGGAKG…SPGAGASVTA (507 aa). ATP is bound at residue 191–198; the sequence is GPPGTGKT. A Zn(2+)-binding site is contributed by H413. E414 is an active-site residue. 2 residues coordinate Zn(2+): H417 and D491.

The protein in the central section; belongs to the AAA ATPase family. This sequence in the C-terminal section; belongs to the peptidase M41 family. In terms of assembly, homohexamer. The cofactor is Zn(2+).

It is found in the cell inner membrane. Functionally, acts as a processive, ATP-dependent zinc metallopeptidase for both cytoplasmic and membrane proteins. Plays a role in the quality control of integral membrane proteins. Absence of FtsH leads to increased sigma-32 levels, which suggests, in analogy to E.coli, that sigma-32 is a substrate for FtsH. May play a role in the general stress response, as overexpression leads to improved resistance to salt stress. The sequence is that of ATP-dependent zinc metalloprotease FtsH from Caulobacter vibrioides (strain NA1000 / CB15N) (Caulobacter crescentus).